Reading from the N-terminus, the 1018-residue chain is UPF0182 protein Tfu_0541 (1018 aa).

7 consecutive transmembrane segments (helical) span residues 20-40 (LAPV…AANF), 64-84 (ALLF…SVYF), 115-135 (VFFW…ATAE), 171-191 (VIIG…VVVH), 212-232 (VHLS…YWLE), 254-274 (AVLY…VLFF), and 287-307 (VSLG…PAIV). Disordered regions lie at residues 497–570 (YPVD…QANN) and 939–965 (GDEA…ASSD). 2 stretches are compositionally biased toward acidic residues: residues 542–560 (QDQE…EEEQ) and 939–959 (GDEA…EEEQ).

The protein belongs to the UPF0182 family.

It localises to the cell membrane. The chain is UPF0182 protein Tfu_0541 from Thermobifida fusca (strain YX).